Consider the following 316-residue polypeptide: NAC domain-containing protein 2 (316 aa).

The region spanning 17–170 is the NAC domain; sequence LPPGFRFHPT…DWVLCRLYNK (154 aa). The DNA-binding element occupies 114-176; it reads LGIKKALVFY…LYNKKNEWEK (63 aa). The interval 185–210 is disordered; that stretch reads EEASDMVTSQSHSHTHSWGETRTPES. Polar residues predominate over residues 190–200; the sequence is MVTSQSHSHTH.

Forms homodimer. Interacts with NAC071. Expressed in roots and stamens.

Its subcellular location is the nucleus. Its function is as follows. Transcription factor that possesses transactivation activity. Transcription activator involved in response to abiotic stresses. Plays a positive role during dehydration and salt stress. Binds specifically to the 5'-CATGTG-3' motif found in promoters of stress-responsive genes. The sequence is that of NAC domain-containing protein 2 from Oryza sativa subsp. japonica (Rice).